The sequence spans 225 residues: Paired immunoglobulin-like type 2 receptor beta-2 (225 aa).

An N-terminal signal peptide occupies residues 1–31 (MALLISLPGETPAMAQILLLLSSACLHAGNS). Residues 32-195 (ARSNGGNDFG…NPSLMNLGAM (164 aa)) are Extracellular-facing. Residues asparagine 90, asparagine 107, and asparagine 160 are each glycosylated (N-linked (GlcNAc...) asparagine). The chain crosses the membrane as a helical span at residues 196–216 (VTMLLAKVVVIILVYGWMIFL). At 217 to 225 (RWKQRPDPA) the chain is on the cytoplasmic side.

The protein localises to the membrane. Paired receptors consist of highly related activating and inhibitory receptors and are widely involved in the regulation of the immune system. PILRB2 is probably a cellular signaling activating receptor that associates with ITAM-bearing adapter molecules on the cell surface. The polypeptide is Paired immunoglobulin-like type 2 receptor beta-2 (Pilrb2) (Mus musculus (Mouse)).